The sequence spans 1576 residues: Pentafunctional AROM polypeptide (1576 aa).

Positions methionine 1 to aspartate 387 are 3-dehydroquinate synthase. Residues aspartate 49–asparagine 51, glutamate 86–lysine 89, glycine 117–valine 119, and aspartate 122 each bind NAD(+). Residue arginine 133 participates in 7-phospho-2-dehydro-3-deoxy-D-arabino-heptonate binding. Threonine 142 to threonine 143 lines the NAD(+) pocket. Residues aspartate 149 and lysine 155 each coordinate 7-phospho-2-dehydro-3-deoxy-D-arabino-heptonate. Lysine 164 contacts NAD(+). 7-phospho-2-dehydro-3-deoxy-D-arabino-heptonate is bound at residue asparagine 165. NAD(+) is bound by residues phenylalanine 182–threonine 185 and asparagine 193. Residue glutamate 197 participates in Zn(2+) binding. 7-phospho-2-dehydro-3-deoxy-D-arabino-heptonate is bound by residues glutamate 197–lysine 200 and lysine 253. Glutamate 263 acts as the Proton acceptor; for 3-dehydroquinate synthase activity in catalysis. Residues arginine 267 to asparagine 271 and histidine 274 each bind 7-phospho-2-dehydro-3-deoxy-D-arabino-heptonate. Histidine 274 is a Zn(2+) binding site. Histidine 278 functions as the Proton acceptor; for 3-dehydroquinate synthase activity in the catalytic mechanism. Residues histidine 290 and lysine 359 each coordinate 7-phospho-2-dehydro-3-deoxy-D-arabino-heptonate. Histidine 290 contributes to the Zn(2+) binding site. Residues valine 400–valine 841 are EPSP synthase. Cysteine 823 functions as the For EPSP synthase activity in the catalytic mechanism. Residues aspartate 863–serine 1055 are shikimate kinase. Residue glycine 870–threonine 877 participates in ATP binding. Positions leucine 1056–glutamate 1276 are 3-dehydroquinase. The active-site Proton acceptor; for 3-dehydroquinate dehydratase activity is the histidine 1179. The Schiff-base intermediate with substrate; for 3-dehydroquinate dehydratase activity role is filled by lysine 1207. The tract at residues proline 1289–alanine 1576 is shikimate dehydrogenase.

In the N-terminal section; belongs to the sugar phosphate cyclases superfamily. Dehydroquinate synthase family. This sequence in the 2nd section; belongs to the EPSP synthase family. The protein in the 3rd section; belongs to the shikimate kinase family. It in the 4th section; belongs to the type-I 3-dehydroquinase family. In the C-terminal section; belongs to the shikimate dehydrogenase family. Homodimer. The cofactor is Zn(2+).

It is found in the cytoplasm. The catalysed reaction is 7-phospho-2-dehydro-3-deoxy-D-arabino-heptonate = 3-dehydroquinate + phosphate. It catalyses the reaction 3-dehydroquinate = 3-dehydroshikimate + H2O. The enzyme catalyses shikimate + NADP(+) = 3-dehydroshikimate + NADPH + H(+). It carries out the reaction shikimate + ATP = 3-phosphoshikimate + ADP + H(+). The catalysed reaction is 3-phosphoshikimate + phosphoenolpyruvate = 5-O-(1-carboxyvinyl)-3-phosphoshikimate + phosphate. It functions in the pathway metabolic intermediate biosynthesis; chorismate biosynthesis; chorismate from D-erythrose 4-phosphate and phosphoenolpyruvate: step 2/7. Its pathway is metabolic intermediate biosynthesis; chorismate biosynthesis; chorismate from D-erythrose 4-phosphate and phosphoenolpyruvate: step 3/7. It participates in metabolic intermediate biosynthesis; chorismate biosynthesis; chorismate from D-erythrose 4-phosphate and phosphoenolpyruvate: step 4/7. The protein operates within metabolic intermediate biosynthesis; chorismate biosynthesis; chorismate from D-erythrose 4-phosphate and phosphoenolpyruvate: step 5/7. It functions in the pathway metabolic intermediate biosynthesis; chorismate biosynthesis; chorismate from D-erythrose 4-phosphate and phosphoenolpyruvate: step 6/7. In terms of biological role, the AROM polypeptide catalyzes 5 consecutive enzymatic reactions in prechorismate polyaromatic amino acid biosynthesis. This Sclerotinia sclerotiorum (strain ATCC 18683 / 1980 / Ss-1) (White mold) protein is Pentafunctional AROM polypeptide.